The following is a 490-amino-acid chain: MVPVVALVGRPNVGKSTLFNRLTRTRDALVADFPGLTRDRKYGRAEIEGREFICIDTGGIDGTEDGVETRMAEQSLLAIEEADVVLFMVDARAGLMPADEAIAKHLRSREKPTFLVANKTDGLDPDQAVVDFYSLGLGEIYPIAASHGRGVLSLLEHVLLPWMEDLAPQEEVDEDAEYWAQFEAEENGEEEEEDDFDPQSLPIKLAIVGRPNVGKSTLTNRILGEERVVVYDMPGTTRDSIYIPMERDGREYVLIDTAGVRKRGKITDAVEKFSVIKTLQAIEDANVVMLVIDAREGISDQDLSLLGFILNSGRSLVIVVNKWDGLSQEVKEQVKETLDFRLGFIDFARVHFISALHGSGVGNLFESVREAYDSSTRRVGTSMLTRIMTMAVEDHQPPLVRGRRVKLKYAHAGGYNPPIVVIHGNQVKDLPDSYKRYLMNYFRKSLDVMGSPIRIQFKEGENPYANKRNTLTPTQMRKRKRLMKHIKKSK.

2 consecutive EngA-type G domains span residues 3 to 166 and 203 to 376; these read PVVA…MEDL and IKLA…DSST. GTP-binding positions include 9–16, 56–60, 118–121, 209–216, 256–260, and 321–324; these read GRPNVGKS, DTGGI, NKTD, DTAGV, and NKWD. Positions 377 to 461 constitute a KH-like domain; sequence RRVGTSMLTR…PIRIQFKEGE (85 aa).

Belongs to the TRAFAC class TrmE-Era-EngA-EngB-Septin-like GTPase superfamily. EngA (Der) GTPase family. Associates with the 50S ribosomal subunit.

In terms of biological role, GTPase that plays an essential role in the late steps of ribosome biogenesis. The polypeptide is GTPase Der (Escherichia coli O17:K52:H18 (strain UMN026 / ExPEC)).